We begin with the raw amino-acid sequence, 238 residues long: Splicing regulator RBM11 (238 aa).

Residues 10–87 (RTVFVGNLEA…RPINVQYRFG (78 aa)) enclose the RRM domain. The segment at 172-238 (ALNHSPGPEA…CRKCKKKKRY (67 aa)) is disordered. Positions 202–237 (NKRKRQRPDSDSDSSSEDKRGNEGSQKCRKCKKKKR) match the Bipartite nuclear localization signal motif. Positions 228–238 (KCRKCKKKKRY) are enriched in basic residues.

Homodimer. Selectively expressed in brain, cerebellum and testis, and to a lower extent in kidney.

Its subcellular location is the nucleus. The protein localises to the nucleoplasm. It is found in the nucleus speckle. Tissue-specific splicing factor with potential implication in the regulation of alternative splicing during neuron and germ cell differentiation. Antagonizes SRSF1-mediated BCL-X splicing. May affect the choice of alternative 5' splice sites by binding to specific sequences in exons and antagonizing the SR protein SRSF1. The polypeptide is Splicing regulator RBM11 (Rbm11) (Mus musculus (Mouse)).